We begin with the raw amino-acid sequence, 254 residues long: Probable phosphatase Shew185_1467 (254 aa).

Zn(2+)-binding residues include histidine 8, histidine 10, histidine 16, histidine 41, glutamate 74, histidine 102, histidine 132, aspartate 193, and histidine 195.

This sequence belongs to the PHP family. The cofactor is Zn(2+).

The chain is Probable phosphatase Shew185_1467 from Shewanella baltica (strain OS185).